The sequence spans 751 residues: MTISPPEREAKKVKIVVDRDPVETSFEKWAKPGHFSRTLSKGPTTTTWIWNLHADAHDFDAQTTDLEEISRKVFSAHFGQLGIIFIWLSGMYFHGARFSNYEAWLSDPTHIKPSAQVVWPIVGQEILNGDVGGGFQGIQITSGFFQLWRASGITTELQLYSTAIGGLVMAAAMFFAGWFHFHKSAPKLEWFQNVESMLNHHLSGLLGLGSLAWAGHQIHVSLPINKLLDAGVDPHEIPLPHELILNPSLMAQLYPSFKQGLAPFFTLNWSEYSDFLTFQGGLNPVTGGLWLTDTAHHHLAIAVLFIVAGHMYRTNWGIGHSMKEILDAHKGPFTGEGHKGLYEILTTSWHAQLAINLALFGSLSIIVAHHQYSMPPYPYLATDYATQLSLFTHHNWIGGFCIVGAAAHAAIFMIRDYDPTNNYNNLLDRVIRHRDAIISHLNWVCIFLGFHSFGLYIHNDTMSALGRPADMFSDTAIQLQPVFAQWIQKTHFLAPGFTAPNALASTSPSWGGDVVAVGGKVAMMPISLGTSDFLVHHVHAFTIHVTVLILLKGVLYARSSRLIPDKANLGFRFPCDGPGRGGTCQVSAWDHVFLGLFWMYNAISVVIFHFSWKMQSDVWGTVNASGISHITGGNFAQSANTINGWLRDFLWAQSSQVIQSYGSSLSAYGLIFLGAHFVWAFSLMFLFSGRGYWQELIESIVWAHNKLKVAPAIQPRALSITQGRAVGVAHYLLGGIATTWSFFLARIIAVG.

8 consecutive transmembrane segments (helical) span residues 73 to 96 (VFSA…FHGA), 159 to 182 (LYST…FHFH), 198 to 222 (LNHH…HVSL), 294 to 312 (TAHH…GHMY), 349 to 372 (WHAQ…HHQY), 388 to 414 (LSLF…IFMI), 436 to 458 (AIIS…LYIH), and 533 to 551 (FLVH…LILL). [4Fe-4S] cluster is bound by residues Cys575 and Cys584. 2 helical membrane passes run 591-612 (HVFL…HFSW) and 665-687 (LSAY…MFLF). His676 lines the chlorophyll a' pocket. 2 residues coordinate chlorophyll a: Met684 and Tyr692. Trp693 lines the phylloquinone pocket. A helical transmembrane segment spans residues 725–745 (AVGVAHYLLGGIATTWSFFLA).

The protein belongs to the PsaA/PsaB family. The PsaA/B heterodimer binds the P700 chlorophyll special pair and subsequent electron acceptors. PSI consists of a core antenna complex that captures photons, and an electron transfer chain that converts photonic excitation into a charge separation. The eukaryotic PSI reaction center is composed of at least 11 subunits. Requires P700 is a chlorophyll a/chlorophyll a' dimer, A0 is one or more chlorophyll a, A1 is one or both phylloquinones and FX is a shared 4Fe-4S iron-sulfur center. as cofactor.

The protein resides in the plastid. It localises to the chloroplast thylakoid membrane. The catalysed reaction is reduced [plastocyanin] + hnu + oxidized [2Fe-2S]-[ferredoxin] = oxidized [plastocyanin] + reduced [2Fe-2S]-[ferredoxin]. Its function is as follows. PsaA and PsaB bind P700, the primary electron donor of photosystem I (PSI), as well as the electron acceptors A0, A1 and FX. PSI is a plastocyanin/cytochrome c6-ferredoxin oxidoreductase, converting photonic excitation into a charge separation, which transfers an electron from the donor P700 chlorophyll pair to the spectroscopically characterized acceptors A0, A1, FX, FA and FB in turn. Oxidized P700 is reduced on the lumenal side of the thylakoid membrane by plastocyanin or cytochrome c6. The polypeptide is Photosystem I P700 chlorophyll a apoprotein A1 (Tupiella akineta (Green alga)).